A 151-amino-acid chain; its full sequence is SsrA-binding protein (151 aa).

The protein belongs to the SmpB family.

It localises to the cytoplasm. Its function is as follows. Required for rescue of stalled ribosomes mediated by trans-translation. Binds to transfer-messenger RNA (tmRNA), required for stable association of tmRNA with ribosomes. tmRNA and SmpB together mimic tRNA shape, replacing the anticodon stem-loop with SmpB. tmRNA is encoded by the ssrA gene; the 2 termini fold to resemble tRNA(Ala) and it encodes a 'tag peptide', a short internal open reading frame. During trans-translation Ala-aminoacylated tmRNA acts like a tRNA, entering the A-site of stalled ribosomes, displacing the stalled mRNA. The ribosome then switches to translate the ORF on the tmRNA; the nascent peptide is terminated with the 'tag peptide' encoded by the tmRNA and targeted for degradation. The ribosome is freed to recommence translation, which seems to be the essential function of trans-translation. This Nitrosomonas europaea (strain ATCC 19718 / CIP 103999 / KCTC 2705 / NBRC 14298) protein is SsrA-binding protein.